Consider the following 1128-residue polypeptide: Phytochrome A (1128 aa).

The segment covering Met-1–Arg-21 has biased composition (low complexity). The interval Met-1–Ile-24 is disordered. One can recognise a GAF domain in the interval Ser-219 to Phe-404. Cys-324 contributes to the phytochromobilin binding site. 2 PAS domains span residues Val-620–Lys-690 and Val-750–Asp-834. Residues Tyr-904–Ser-1124 form the Histidine kinase domain.

This sequence belongs to the phytochrome family. As to quaternary structure, homodimer. In terms of processing, contains one covalently linked phytochromobilin chromophore.

Regulatory photoreceptor which exists in two forms that are reversibly interconvertible by light: the Pr form that absorbs maximally in the red region of the spectrum and the Pfr form that absorbs maximally in the far-red region. Photoconversion of Pr to Pfr induces an array of morphogenic responses, whereas reconversion of Pfr to Pr cancels the induction of those responses. Pfr controls the expression of a number of nuclear genes including those encoding the small subunit of ribulose-bisphosphate carboxylase, chlorophyll A/B binding protein, protochlorophyllide reductase, rRNA, etc. It also controls the expression of its own gene(s) in a negative feedback fashion. In Oryza sativa subsp. indica (Rice), this protein is Phytochrome A (PHYA).